The primary structure comprises 260 residues: Repetitive secreted protein 1 (260 aa).

The first 20 residues, 1 to 20, serve as a signal peptide directing secretion; that stretch reads MKLSFTIVATAALVASCTFA.

Post-translationally, rsp1 is processed by the subtilisin-like endoprotease kex2. Cleavage by kex2 generates 11 peptides.

Its subcellular location is the secreted. Its function is as follows. Repetitive secreted protein essential for pathogenic development. Hum3 and rsp1 together are pathogenicity proteins that share an essential function in early stages of the infection. The sequence is that of Repetitive secreted protein 1 from Mycosarcoma maydis (Corn smut fungus).